The sequence spans 319 residues: Thioredoxin reductase (319 aa).

Residues 11 to 14 (SGPA), 40 to 41 (IA), Q45, N54, V87, C145, D288, and 295 to 297 (RQA) each bind FAD. C142 and C145 are disulfide-bonded.

It belongs to the class-II pyridine nucleotide-disulfide oxidoreductase family. As to quaternary structure, homodimer. FAD serves as cofactor.

It is found in the cytoplasm. The enzyme catalyses [thioredoxin]-dithiol + NADP(+) = [thioredoxin]-disulfide + NADPH + H(+). The polypeptide is Thioredoxin reductase (TRR1) (Yarrowia lipolytica (strain CLIB 122 / E 150) (Yeast)).